The primary structure comprises 147 residues: Small ribosomal subunit protein bS18 (147 aa).

The protein belongs to the bacterial ribosomal protein bS18 family. In terms of assembly, part of the 30S ribosomal subunit. Forms a tight heterodimer with protein bS6.

Its function is as follows. Binds as a heterodimer with protein bS6 to the central domain of the 16S rRNA, where it helps stabilize the platform of the 30S subunit. This Dehalococcoides mccartyi (strain ATCC BAA-2100 / JCM 16839 / KCTC 5957 / BAV1) protein is Small ribosomal subunit protein bS18.